A 357-amino-acid polypeptide reads, in one-letter code: MNISSFSDNLTKILGKYEDLSEKLSSGIGGEEFVKASKEYADLEDIVQKIKEYNKAKAELEEANNFKQEPSLDKATLEMIEEEIRNLEDSLPTLERSVKIALLPKDEADSKSAIIEIRAGTGGEEAALFAAKLFNMYQRYAELKGWRFEILSIDETGIGGYKEVSASIKGKDVFSKLKFESGVHRVQRVPETESQGRIHTSAATVAVLPEVEDVDIKLEEKDLRIDTYRASGAGGQHVNTTDSAVRITHIPTGITVALQDEKSQHKNKAKALKILRARIYEEERRKKDQERANNRREQIGSGDRSERIRTYNFPQGRVSDHRINLTLYKIDEVINGQLDEFIEALIANDEAKKLSDI.

An N5-methylglutamine modification is found at Gln236. Residues 283–309 are compositionally biased toward basic and acidic residues; the sequence is ERRKKDQERANNRREQIGSGDRSERIR. The interval 283–313 is disordered; the sequence is ERRKKDQERANNRREQIGSGDRSERIRTYNF.

It belongs to the prokaryotic/mitochondrial release factor family. Post-translationally, methylated by PrmC. Methylation increases the termination efficiency of RF1.

Its subcellular location is the cytoplasm. Its function is as follows. Peptide chain release factor 1 directs the termination of translation in response to the peptide chain termination codons UAG and UAA. In Rickettsia bellii (strain OSU 85-389), this protein is Peptide chain release factor 1.